The primary structure comprises 152 residues: Endoribonuclease YbeY (152 aa).

Residues His113, His117, and His123 each contribute to the Zn(2+) site.

Belongs to the endoribonuclease YbeY family. It depends on Zn(2+) as a cofactor.

The protein localises to the cytoplasm. Functionally, single strand-specific metallo-endoribonuclease involved in late-stage 70S ribosome quality control and in maturation of the 3' terminus of the 16S rRNA. This chain is Endoribonuclease YbeY, found in Paracidovorax citrulli (strain AAC00-1) (Acidovorax citrulli).